We begin with the raw amino-acid sequence, 167 residues long: Male-specific protein scotti (167 aa).

Residues Asn30, Asn124, and Asn148 are each glycosylated (N-linked (GlcNAc...) asparagine).

It belongs to the male-specific scotti family.

Functionally, post-meiotically transcribed gene that has a role in late spermiogenesis; required for actin cone progression during spermatid individualization. The protein is Male-specific protein scotti of Drosophila ananassae (Fruit fly).